The sequence spans 194 residues: ATP synthase subunit delta (194 aa).

It belongs to the ATPase delta chain family. In terms of assembly, F-type ATPases have 2 components, F(1) - the catalytic core - and F(0) - the membrane proton channel. F(1) has five subunits: alpha(3), beta(3), gamma(1), delta(1), epsilon(1). F(0) has three main subunits: a(1), b(2) and c(10-14). The alpha and beta chains form an alternating ring which encloses part of the gamma chain. F(1) is attached to F(0) by a central stalk formed by the gamma and epsilon chains, while a peripheral stalk is formed by the delta and b chains.

The protein localises to the cell inner membrane. Functionally, f(1)F(0) ATP synthase produces ATP from ADP in the presence of a proton or sodium gradient. F-type ATPases consist of two structural domains, F(1) containing the extramembraneous catalytic core and F(0) containing the membrane proton channel, linked together by a central stalk and a peripheral stalk. During catalysis, ATP synthesis in the catalytic domain of F(1) is coupled via a rotary mechanism of the central stalk subunits to proton translocation. In terms of biological role, this protein is part of the stalk that links CF(0) to CF(1). It either transmits conformational changes from CF(0) to CF(1) or is implicated in proton conduction. The sequence is that of ATP synthase subunit delta from Bartonella quintana (strain Toulouse) (Rochalimaea quintana).